An 84-amino-acid chain; its full sequence is Cell division topological specificity factor (84 aa).

The protein belongs to the MinE family.

Its function is as follows. Prevents the cell division inhibition by proteins MinC and MinD at internal division sites while permitting inhibition at polar sites. This ensures cell division at the proper site by restricting the formation of a division septum at the midpoint of the long axis of the cell. The chain is Cell division topological specificity factor from Burkholderia cenocepacia (strain ATCC BAA-245 / DSM 16553 / LMG 16656 / NCTC 13227 / J2315 / CF5610) (Burkholderia cepacia (strain J2315)).